We begin with the raw amino-acid sequence, 173 residues long: Zinc finger matrin-type protein 5 (173 aa).

The segment at 51–79 adopts a C3H1-type zinc-finger fold; that stretch reads ERSKEVCRKFVQTGQCVFGTSCRFSHMSE. A disordered region spans residues 83 to 111; it reads KMLEQKIDDEKRQKEDPDQDGSSERSVDE.

Component of the U11/U12 snRNPs that are part of the U12-type spliceosome.

It is found in the nucleus. This chain is Zinc finger matrin-type protein 5 (zmat5), found in Danio rerio (Zebrafish).